The primary structure comprises 126 residues: Hydrogenase maturation factor HypA (126 aa).

H2 is a Ni(2+) binding site. Residues C78, C81, C97, and C100 each contribute to the Zn(2+) site.

The protein belongs to the HypA/HybF family.

Functionally, involved in the maturation of [NiFe] hydrogenases. Required for nickel insertion into the metal center of the hydrogenase. The protein is Hydrogenase maturation factor HypA of Methanococcus maripaludis (strain C7 / ATCC BAA-1331).